The sequence spans 39 residues: Omega-theraphotoxin-Ba1b (39 aa).

3 cysteine pairs are disulfide-bonded: Cys-4/Cys-17, Cys-8/Cys-31, and Cys-25/Cys-36.

This sequence belongs to the neurotoxin 12 (Hwtx-2) family. 06 (TXP1) subfamily. As to expression, expressed by the venom gland.

Its subcellular location is the secreted. Inhibits voltage-gated calcium channels (Cav) in rat cerebellar granule cells. Has insecticidal activity to crickets (Acheta domesticus). Is not toxic to mice. This chain is Omega-theraphotoxin-Ba1b, found in Brachypelma albiceps (Mexican golden redrump tarantula).